The following is a 612-amino-acid chain: Dihydroxy-acid dehydratase (612 aa).

Asp81 is a binding site for Mg(2+). Cys122 is a binding site for [2Fe-2S] cluster. Mg(2+) is bound by residues Asp123 and Lys124. Position 124 is an N6-carboxylysine (Lys124). Cys193 provides a ligand contact to [2Fe-2S] cluster. Glu489 provides a ligand contact to Mg(2+). Ser515 (proton acceptor) is an active-site residue.

Belongs to the IlvD/Edd family. As to quaternary structure, homodimer. The cofactor is [2Fe-2S] cluster. Requires Mg(2+) as cofactor.

It carries out the reaction (2R)-2,3-dihydroxy-3-methylbutanoate = 3-methyl-2-oxobutanoate + H2O. The enzyme catalyses (2R,3R)-2,3-dihydroxy-3-methylpentanoate = (S)-3-methyl-2-oxopentanoate + H2O. The protein operates within amino-acid biosynthesis; L-isoleucine biosynthesis; L-isoleucine from 2-oxobutanoate: step 3/4. It functions in the pathway amino-acid biosynthesis; L-valine biosynthesis; L-valine from pyruvate: step 3/4. Its function is as follows. Functions in the biosynthesis of branched-chain amino acids. Catalyzes the dehydration of (2R,3R)-2,3-dihydroxy-3-methylpentanoate (2,3-dihydroxy-3-methylvalerate) into 2-oxo-3-methylpentanoate (2-oxo-3-methylvalerate) and of (2R)-2,3-dihydroxy-3-methylbutanoate (2,3-dihydroxyisovalerate) into 2-oxo-3-methylbutanoate (2-oxoisovalerate), the penultimate precursor to L-isoleucine and L-valine, respectively. The chain is Dihydroxy-acid dehydratase from Xanthomonas axonopodis pv. citri (strain 306).